Reading from the N-terminus, the 320-residue chain is Glutaminase (320 aa).

The substrate site is built by S70, N121, E165, N172, Y196, Y248, and V266.

It belongs to the glutaminase family. As to quaternary structure, homotetramer.

The catalysed reaction is L-glutamine + H2O = L-glutamate + NH4(+). This is Glutaminase from Mycobacterium marinum (strain ATCC BAA-535 / M).